The chain runs to 1544 residues: Lysophospholipase NTE1 (1544 aa).

Residues 1-37 (MSTIEIVSTVAEYTEIHSPVSSKFLLPSARDSSSSIS) lie on the Cytoplasmic side of the membrane. A helical transmembrane segment spans residues 38–58 (LFSAIFWFWSWLFFKIMNIFL). At 59 to 76 (YYIPNIIVNLFSVNFQIT) the chain is on the lumenal side. Residues 77 to 97 (LSLSSIVITLTGIISFCFLIV) form a helical membrane-spanning segment. Topologically, residues 98–1544 (RYKYLTRYSK…RKSLYRRSSI (1447 aa)) are cytoplasmic. Disordered regions lie at residues 265–312 (RLFS…RNYP) and 424–552 (ESPS…EETE). Residues 275 to 310 (NPASNPLSPDNTGSKSFDPLSSGNFNDTSLSSSDRN) are compositionally biased toward polar residues. Residues 425–447 (SPSVSINKTSSSSSSLPKKSTTS) are compositionally biased toward low complexity. 2 stretches are compositionally biased toward polar residues: residues 448 to 458 (LRPLNRNQSSR) and 517 to 536 (QISS…TTKF). The segment covering 537 to 546 (ENIRDRTFSD) has biased composition (basic and acidic residues). A nucleoside 3',5'-cyclic phosphate is bound by residues 681 to 811 (SFES…LKSL) and 807 to 960 (KLKS…VANK). The PNPLA domain maps to 1237-1401 (LVLGGGGSRG…LDNLPVMEMK (165 aa)). Positions 1241–1246 (GGGSRG) match the GXGXXG motif. A GXSXG motif is present at residues 1268-1272 (GTSIG). Serine 1270 acts as the Nucleophile in catalysis. Aspartate 1388 (proton acceptor) is an active-site residue. The DGA/G signature appears at 1388-1390 (DGG).

The protein belongs to the NTE family.

It is found in the endoplasmic reticulum membrane. It carries out the reaction a 1-acyl-sn-glycero-3-phosphocholine + H2O = sn-glycerol 3-phosphocholine + a fatty acid + H(+). With respect to regulation, inhibited by organophosphorus esters. In terms of biological role, intracellular phospholipase B that catalyzes the double deacylation of phosphatidylcholine (PC) to glycerophosphocholine (GroPCho). Plays an important role in membrane lipid homeostasis. Responsible for the rapid PC turnover in response to inositol, elevated temperatures, or when choline is present in the growth medium. The polypeptide is Lysophospholipase NTE1 (NTE1) (Debaryomyces hansenii (strain ATCC 36239 / CBS 767 / BCRC 21394 / JCM 1990 / NBRC 0083 / IGC 2968) (Yeast)).